The primary structure comprises 191 residues: Protein NUCLEAR FUSION DEFECTIVE 2 (191 aa).

The signal sequence occupies residues 1–29; it reads MATLRFTLLLLVFVVGIFFSFSSVSHVRA. The RNase III domain maps to 48–167; it reads LAKLQTQIGY…IFGAIAIDAG (120 aa).

Its function is as follows. Required for karyogamy during female gametophyte development, when the two polar nuclei fuse to form the diploid central cell nucleus. In Arabidopsis thaliana (Mouse-ear cress), this protein is Protein NUCLEAR FUSION DEFECTIVE 2.